We begin with the raw amino-acid sequence, 447 residues long: Methylenetetrahydrofolate--tRNA-(uracil-5-)-methyltransferase TrmFO (447 aa).

10 to 15 contacts FAD; it reads GAGLAG.

Belongs to the MnmG family. TrmFO subfamily. It depends on FAD as a cofactor.

Its subcellular location is the cytoplasm. It carries out the reaction uridine(54) in tRNA + (6R)-5,10-methylene-5,6,7,8-tetrahydrofolate + NADH + H(+) = 5-methyluridine(54) in tRNA + (6S)-5,6,7,8-tetrahydrofolate + NAD(+). The enzyme catalyses uridine(54) in tRNA + (6R)-5,10-methylene-5,6,7,8-tetrahydrofolate + NADPH + H(+) = 5-methyluridine(54) in tRNA + (6S)-5,6,7,8-tetrahydrofolate + NADP(+). Functionally, catalyzes the folate-dependent formation of 5-methyl-uridine at position 54 (M-5-U54) in all tRNAs. This Lactococcus lactis subsp. lactis (strain IL1403) (Streptococcus lactis) protein is Methylenetetrahydrofolate--tRNA-(uracil-5-)-methyltransferase TrmFO.